A 119-amino-acid polypeptide reads, in one-letter code: Large ribosomal subunit protein bL20 (119 aa).

It belongs to the bacterial ribosomal protein bL20 family.

In terms of biological role, binds directly to 23S ribosomal RNA and is necessary for the in vitro assembly process of the 50S ribosomal subunit. It is not involved in the protein synthesizing functions of that subunit. The sequence is that of Large ribosomal subunit protein bL20 from Acidithiobacillus ferrooxidans (strain ATCC 23270 / DSM 14882 / CIP 104768 / NCIMB 8455) (Ferrobacillus ferrooxidans (strain ATCC 23270)).